A 150-amino-acid chain; its full sequence is Large ribosomal subunit protein bL9 (150 aa).

This sequence belongs to the bacterial ribosomal protein bL9 family.

In terms of biological role, binds to the 23S rRNA. This is Large ribosomal subunit protein bL9 from Corynebacterium diphtheriae (strain ATCC 700971 / NCTC 13129 / Biotype gravis).